Consider the following 192-residue polypeptide: Probable nicotinate-nucleotide adenylyltransferase (192 aa).

This sequence belongs to the NadD family.

It catalyses the reaction nicotinate beta-D-ribonucleotide + ATP + H(+) = deamido-NAD(+) + diphosphate. The protein operates within cofactor biosynthesis; NAD(+) biosynthesis; deamido-NAD(+) from nicotinate D-ribonucleotide: step 1/1. Catalyzes the reversible adenylation of nicotinate mononucleotide (NaMN) to nicotinic acid adenine dinucleotide (NaAD). The chain is Probable nicotinate-nucleotide adenylyltransferase from Staphylococcus haemolyticus (strain JCSC1435).